Reading from the N-terminus, the 828-residue chain is Transcription factor SOX-6 (828 aa).

The disordered stretch occupies residues 1–51 (MSSKQATSPFACAADGEDAMTQDLTSREKEEGSDQHVASHLPLHPIMHNKP). Basic and acidic residues predominate over residues 25–34 (TSREKEEGSD). Thr-119 carries the post-translational modification Phosphothreonine. Positions 184 to 262 (LAEKERQLST…LLQQQIQVQG (79 aa)) form a coiled coil. The segment at 380-470 (SPGAKMPSTP…KSSIPSPIGG (91 aa)) is disordered. Over residues 393 to 402 (NTAGTVSPTG) the composition is skewed to polar residues. A Phosphoserine modification is found at Ser-399. At Thr-401 the chain carries Phosphothreonine. Glycyl lysine isopeptide (Lys-Gly) (interchain with G-Cter in SUMO) cross-links involve residues Lys-404 and Lys-417. Ser-439 and Ser-442 each carry phosphoserine. Over residues 439–461 (SPTSPTQNLFPASKTSPVNLPNK) the composition is skewed to polar residues. The HMG box DNA-binding region spans 621 to 689 (IKRPMNAFMV…IHLEKYPNYK (69 aa)). Residues 753-781 (TPSPQMTSDCSSTSASPEPSLPVIQSTYG) are compositionally biased toward polar residues. The tract at residues 753 to 828 (TPSPQMTSDC…NEAPEAVSAN (76 aa)) is disordered. Residues 796 to 809 (NGEDEMEMYDDYED) show a composition bias toward acidic residues.

As to quaternary structure, homodimer. Interacts with DAZAP2. May interact with CENPK. Post-translationally, sumoylation inhibits the transcriptional activity. As to expression, expressed in a wide variety of tissues, most abundantly in skeletal musclen.

The protein resides in the nucleus. It is found in the cytoplasm. In terms of biological role, transcription factor that plays a key role in several developmental processes, including neurogenesis, chondrocytes differentiation and cartilage formation. Specifically binds the 5'-AACAAT-3' DNA motif present in enhancers and super-enhancers and promotes expression of genes important for chondrogenesis. Required for overt chondrogenesis when condensed prechondrocytes differentiate into early stage chondrocytes: SOX5 and SOX6 cooperatively bind with SOX9 on active enhancers and super-enhancers associated with cartilage-specific genes, and thereby potentiate SOX9's ability to transactivate. Not involved in precartilaginous condensation, the first step in chondrogenesis, during which skeletal progenitors differentiate into prechondrocytes. Together with SOX5, required to form and maintain a pool of highly proliferating chondroblasts between epiphyses and metaphyses, to form columnar chondroblasts, delay chondrocyte prehypertrophy but promote hypertrophy, and to delay terminal differentiation of chondrocytes on contact with ossification fronts. Binds to the proximal promoter region of the myelin protein MPZ gene, and is thereby involved in the differentiation of oligodendroglia in the developing spinal tube. Binds to the gene promoter of MBP and acts as a transcriptional repressor. The protein is Transcription factor SOX-6 of Homo sapiens (Human).